Here is a 418-residue protein sequence, read N- to C-terminus: Glutamyl-tRNA reductase (418 aa).

Substrate is bound by residues 49–52, Ser109, 114–116, and Gln120; these read TCNR and EPQ. Residue Cys50 is the Nucleophile of the active site. 189–194 lines the NADP(+) pocket; sequence GAGETI.

Belongs to the glutamyl-tRNA reductase family. As to quaternary structure, homodimer.

It catalyses the reaction (S)-4-amino-5-oxopentanoate + tRNA(Glu) + NADP(+) = L-glutamyl-tRNA(Glu) + NADPH + H(+). It functions in the pathway porphyrin-containing compound metabolism; protoporphyrin-IX biosynthesis; 5-aminolevulinate from L-glutamyl-tRNA(Glu): step 1/2. Functionally, catalyzes the NADPH-dependent reduction of glutamyl-tRNA(Glu) to glutamate 1-semialdehyde (GSA). In Salmonella dublin (strain CT_02021853), this protein is Glutamyl-tRNA reductase.